The sequence spans 373 residues: Chaperone protein DnaJ (373 aa).

A J domain is found at 5–70 (DFYATLGVAR…EKRAMYDQYG (66 aa)). Residues 134 to 212 (GVKKRINIPT…CRGVGRNKAV (79 aa)) form a CR-type zinc finger. 8 residues coordinate Zn(2+): C147, C150, C164, C167, C186, C189, C200, and C203. CXXCXGXG motif repeat units lie at residues 147 to 154 (CDVCNGSG), 164 to 171 (CPTCKGSG), 186 to 193 (CPTCRGAG), and 200 to 207 (CVKCRGVG).

This sequence belongs to the DnaJ family. As to quaternary structure, homodimer. Zn(2+) serves as cofactor.

The protein localises to the cytoplasm. Participates actively in the response to hyperosmotic and heat shock by preventing the aggregation of stress-denatured proteins and by disaggregating proteins, also in an autonomous, DnaK-independent fashion. Unfolded proteins bind initially to DnaJ; upon interaction with the DnaJ-bound protein, DnaK hydrolyzes its bound ATP, resulting in the formation of a stable complex. GrpE releases ADP from DnaK; ATP binding to DnaK triggers the release of the substrate protein, thus completing the reaction cycle. Several rounds of ATP-dependent interactions between DnaJ, DnaK and GrpE are required for fully efficient folding. Also involved, together with DnaK and GrpE, in the DNA replication of plasmids through activation of initiation proteins. This Neisseria gonorrhoeae (strain ATCC 700825 / FA 1090) protein is Chaperone protein DnaJ.